We begin with the raw amino-acid sequence, 313 residues long: Leucine-rich repeat-containing protein 52 (313 aa).

A signal peptide spans 1–23; it reads MSLASGPGPGWLLFSFGMGLVSG. In terms of domain architecture, LRRNT spans 24–53; sequence SKCPNNCLCQAQEVICTGKQLTEYPLDIPL. The Extracellular segment spans residues 24-244; the sequence is SKCPNNCLCQ…MCITHLDHKD (221 aa). 2 disulfides stabilise this stretch: cysteine 26/cysteine 32 and cysteine 30/cysteine 39. LRR repeat units lie at residues 54 to 75, 78 to 99, 102 to 123, 126 to 148, and 151 to 172; these read NTRR…HLGL, DLVY…TFIG, KLIY…TFSV, NLVQ…TFAN, and SLRY…ALYH. Residues asparagine 112 and asparagine 148 are each glycosylated (N-linked (GlcNAc...) asparagine). Positions 184-238 constitute an LRRCT domain; sequence NPWKCNCSFLDFAIFLIVFHMDPSDDLNATCVEPTELTGWPITRVGNPLRYMCIT. 2 disulfides stabilise this stretch: cysteine 188–cysteine 214 and cysteine 190–cysteine 236. Asparagine 189 and asparagine 211 each carry an N-linked (GlcNAc...) asparagine glycan. The helical transmembrane segment at 245–265 threads the bilayer; that stretch reads YIFLLLIGFCIFAAGTVAAWL. Over 266–313 the chain is Cytoplasmic; it reads TGVCAVLYQNTRHKSSEEDEDEAGTRVEVSRRIFQTQTSSVQEFPQLI.

May interact with KCNU1; this interaction may be required for LRRC52 stability and may change the channel gating properties. Interacts with KCNMA1. In terms of processing, N-glycosylated. As to expression, mainly expressed in testis and skeletal muscle.

It is found in the cell membrane. Its function is as follows. Auxiliary protein of the large-conductance, voltage and calcium-activated potassium channel (BK alpha). Modulates gating properties by producing a marked shift in the BK channel's voltage dependence of activation in the hyperpolarizing direction, and in the absence of calcium. KCNU1 channel auxiliary protein. Modulates KCNU1 gating properties. This chain is Leucine-rich repeat-containing protein 52 (LRRC52), found in Homo sapiens (Human).